We begin with the raw amino-acid sequence, 204 residues long: Probable nicotinate-nucleotide adenylyltransferase (204 aa).

Belongs to the NadD family.

The catalysed reaction is nicotinate beta-D-ribonucleotide + ATP + H(+) = deamido-NAD(+) + diphosphate. It participates in cofactor biosynthesis; NAD(+) biosynthesis; deamido-NAD(+) from nicotinate D-ribonucleotide: step 1/1. Functionally, catalyzes the reversible adenylation of nicotinate mononucleotide (NaMN) to nicotinic acid adenine dinucleotide (NaAD). The polypeptide is Probable nicotinate-nucleotide adenylyltransferase (Dehalococcoides mccartyi (strain ATCC BAA-2100 / JCM 16839 / KCTC 5957 / BAV1)).